The primary structure comprises 186 residues: Putative transcriptional regulator encoded by LINC00473 (186 aa).

Positions 1 to 62 (MELSAAAGRR…RDCTPTCTNA (62 aa)) are disordered. The segment covering 18–40 (FTGRHRTERSQERGSTPRKERSM) has biased composition (basic and acidic residues).

In terms of biological role, may play a role in cAMP-mediated gene transcription. The sequence is that of Putative transcriptional regulator encoded by LINC00473 (LINC00473) from Homo sapiens (Human).